Consider the following 388-residue polypeptide: MPALTQHSTSITLFRISAAMFLNYLTIGIPLVMLPLYVQQQLHLSDLLIGIAVGSQFIATLLTRGAAGRKADTSGGRRTVITGQFYCAASGLLMLVSLIAHPVPLLAWAILIVGRVLLGIGESFILTGNLTWGMWLAGSTHAGQVISWNGMATYGALAIGAPLGLSLYARAGLALPALLVVLLPIIASGVIYGIPGNIPTARPRVPVLRVVGLVWRPGTGLVLQGIGFATLSAFTALWFNERHWDNTGFAMTLFGIAFIAVRFFCAKFPDRYGGATVATFSLLVEGTGLAVMWAAPSAGAALIGAAITGCGCSLMFPSLGVEVVRRVPPEIRGTALGVWSAFQDLAYGFTGPIAGLLTPFIGYQQVFLLAAACALLGAAVVHLLLRQH.

Helical transmembrane passes span 18 to 38 (AAMF…PLYV), 42 to 62 (LHLS…ATLL), 89 to 111 (ASGL…WAIL), 116 to 136 (VLLG…GMWL), 145 to 165 (VISW…PLGL), 171 to 191 (AGLA…SGVI), 219 to 239 (TGLV…ALWF), 248 to 268 (GFAM…CAKF), 287 to 307 (TGLA…GAAI), 341 to 361 (AFQD…TPFI), and 365 to 385 (QVFL…HLLL).

This sequence belongs to the major facilitator superfamily. YfcJ family.

It localises to the cell inner membrane. This is an uncharacterized protein from Salmonella typhimurium (strain LT2 / SGSC1412 / ATCC 700720).